A 181-amino-acid polypeptide reads, in one-letter code: Disulfide bond formation protein B (181 aa).

Residues 1-13 (MLSVGQWPNKPFA) are Cytoplasmic-facing. A helical membrane pass occupies residues 14-30 (WLLLFLGCSGLLGAALY). Topologically, residues 31–48 (FQMVLNLEPCVKCVYQRM) are periplasmic. The cysteines at positions 40 and 43 are disulfide-linked. A helical transmembrane segment spans residues 49 to 64 (AVIGIGLSAIVGLFGS). Residues 65-71 (GLWLTRW) are Cytoplasmic-facing. The helical transmembrane segment at 72 to 89 (AALIGWLYSSYQGLLIAY) threads the bilayer. Over 90–145 (DHWDLQTSKNAFFAVCESAPNFPDWAPMHEWMPGLFAAPGLCGDIDWQWLGLGMPG) the chain is Periplasmic. A disulfide bridge connects residues Cys105 and Cys131. A helical membrane pass occupies residues 146–164 (WMTVIFAGLLLIGIIVTIC). Topologically, residues 165–181 (HIISSFTKKDGLVLYHK) are cytoplasmic.

It belongs to the DsbB family.

Its subcellular location is the cell inner membrane. Required for disulfide bond formation in some periplasmic proteins. Acts by oxidizing the DsbA protein. This Idiomarina loihiensis (strain ATCC BAA-735 / DSM 15497 / L2-TR) protein is Disulfide bond formation protein B.